A 320-amino-acid chain; its full sequence is MKFGKDFRSHLEETLPAWRDKYLAYKSLKKLIKNLPPDGDPPPVAAAAEVPAGDGDGDGGIALGNWFARVLDMELQKLNDFYIEREEWYVIRLQVLKERIERVKAKKNGAFTSKSEFTEEMLEIRKAFVIIHGEMILLQTYSSLNFAGLVKILKKYDKRTGGLLSLPFTQRARHQPFFTTEPLTRLVRECEANLELLFPIEAEVLESASSSAKLQPQNDDAASHDPASSVDVETSDVYRSTLAAMKAIQGLRKASSTYNPLSLARFFHGEDGEACSGAITSESDSYSDSQIEDAEDDDKEVQSREQNTAQNAAEGQPRDE.

An SPX domain is found at 1 to 170; that stretch reads MKFGKDFRSH…GGLLSLPFTQ (170 aa). 2 disordered regions span residues 209–233 and 275–320; these read SSSA…VDVE and CSGA…PRDE. Residues 278 to 289 show a composition bias toward polar residues; sequence AITSESDSYSDS. Over residues 290–299 the composition is skewed to acidic residues; the sequence is QIEDAEDDDK. The span at 304 to 313 shows a compositional bias: polar residues; it reads REQNTAQNAA.

Homodimer. Interacts (via N-terminus) with PHR2 (via C-terminus) in the presence of inositol polyphosphate. Interacts with BHLH6. In terms of processing, degraded under Pi starvation conditions through the ubiquitin/26S proteasome pathway. In terms of tissue distribution, widely expressed. Detected in root cells, with the exception of epidermis, and in mesophyll and vascular bundles in leaves.

It localises to the membrane. It is found in the nucleus. The protein resides in the cytoplasm. In terms of biological role, inositol polyphosphate sensor that associates with transcription factors to regulate Pi starvation responses. The SPX domain provides a basic binding surface for inositol polyphosphate signaling molecules. Interacts with PHR2 to inhibit its translocation to the nucleus and repress its DNA-binding activity, and then negatively regulate Pi signaling. The chain is SPX domain-containing protein 4 from Oryza sativa subsp. japonica (Rice).